The following is a 296-amino-acid chain: Ribosomal RNA small subunit methyltransferase A (296 aa).

The S-adenosyl-L-methionine site is built by N30, L32, G57, E78, D103, and N128.

Belongs to the class I-like SAM-binding methyltransferase superfamily. rRNA adenine N(6)-methyltransferase family. RsmA subfamily.

It localises to the cytoplasm. The catalysed reaction is adenosine(1518)/adenosine(1519) in 16S rRNA + 4 S-adenosyl-L-methionine = N(6)-dimethyladenosine(1518)/N(6)-dimethyladenosine(1519) in 16S rRNA + 4 S-adenosyl-L-homocysteine + 4 H(+). Specifically dimethylates two adjacent adenosines (A1518 and A1519) in the loop of a conserved hairpin near the 3'-end of 16S rRNA in the 30S particle. May play a critical role in biogenesis of 30S subunits. The protein is Ribosomal RNA small subunit methyltransferase A of Macrococcus caseolyticus (strain JCSC5402) (Macrococcoides caseolyticum).